The primary structure comprises 311 residues: Tricarboxylate transport protein, mitochondrial (311 aa).

Residues 1-13 constitute a propeptide, removed in mature form; it reads MAAARAPRALTSA. Low complexity predominate over residues 1 to 15; it reads MAAARAPRALTSASP. The disordered stretch occupies residues 1 to 22; the sequence is MAAARAPRALTSASPGSGKAKL. Solcar repeat units follow at residues 23–111, 122–208, and 218–303; these read THPG…LSNH, TRGL…LRNW, and MNPL…VVKL. The next 3 membrane-spanning stretches (helical) occupy residues 29–46, 86–105, and 129–143; these read ILAG…TFPT, GLSS…FGTF, and LGAG…VCPM. Ser-156 carries the post-translational modification Phosphoserine. A run of 3 helical transmembrane segments spans residues 183–202, 224–241, and 278–297; these read GLTA…FFVM, GVFG…NTPL, and GTVP…FIIY.

The protein belongs to the mitochondrial carrier (TC 2.A.29) family. In terms of processing, possesses a short cleavable presequence, which, however, is found to be dispensable both for targeting to mitochondria and insertion into the inner membrane. However, the presequence is required to keep SLC25A1 in a soluble state and thus in an import-competent state. Mature SLC25A1 lacking the presequence is prone to aggregation.

It is found in the mitochondrion inner membrane. The protein resides in the mitochondrion membrane. The catalysed reaction is (S)-malate(in) + citrate(out) = (S)-malate(out) + citrate(in). It carries out the reaction D-threo-isocitrate(in) + citrate(out) = D-threo-isocitrate(out) + citrate(in). It catalyses the reaction citrate(out) + succinate(in) = citrate(in) + succinate(out). The enzyme catalyses phosphoenolpyruvate(in) + citrate(out) = phosphoenolpyruvate(out) + citrate(in). The catalysed reaction is cis-aconitate(in) + citrate(out) = cis-aconitate(out) + citrate(in). It carries out the reaction trans-aconitate(in) + citrate(out) = trans-aconitate(out) + citrate(in). It catalyses the reaction maleate(in) + citrate(out) = maleate(out) + citrate(in). In terms of biological role, mitochondrial electroneutral antiporter that exports citrate from the mitochondria into the cytosol in exchange for malate. Also able to mediate the exchange of citrate for isocitrate, phosphoenolpyruvate, cis-aconitate and to a lesser extent trans-aconitate, maleate and succinate. In the cytoplasm, citrate plays important roles in fatty acid and sterol synthesis, regulation of glycolysis, protein acetylation, and other physiopathological processes. This chain is Tricarboxylate transport protein, mitochondrial (SLC25A1), found in Bos taurus (Bovine).